Consider the following 582-residue polypeptide: Potassium-transporting ATPase potassium-binding subunit (582 aa).

The next 10 membrane-spanning stretches (helical) occupy residues 11 to 31, 81 to 101, 148 to 168, 195 to 215, 272 to 292, 298 to 318, 379 to 399, 401 to 421, 439 to 459, and 551 to 571; these read AVFF…LAWV, LKAV…VLMF, FGIG…MPAF, LLPI…VQTI, VLTL…GAWV, GVAI…VAVV, ALGA…NGVG, GLLN…LMIG, VFVV…AAVV, and GLLI…ALVF.

Belongs to the KdpA family. In terms of assembly, the system is composed of three essential subunits: KdpA, KdpB and KdpC.

It localises to the cell membrane. Its function is as follows. Part of the high-affinity ATP-driven potassium transport (or Kdp) system, which catalyzes the hydrolysis of ATP coupled with the electrogenic transport of potassium into the cytoplasm. This subunit binds the extracellular potassium ions and delivers the ions to the membrane domain of KdpB through an intramembrane tunnel. In Halobacterium salinarum (strain ATCC 700922 / JCM 11081 / NRC-1) (Halobacterium halobium), this protein is Potassium-transporting ATPase potassium-binding subunit.